The sequence spans 317 residues: Melanocyte-stimulating hormone receptor (317 aa).

Topologically, residues 1–37 (MPAQGSQRSXLGSLNSTLMATPSLGLAANQSGPQCLE) are extracellular. Residues N15 and N29 are each glycosylated (N-linked (GlcNAc...) asparagine). A helical membrane pass occupies residues 38–63 (VSVPDGLFLCLGLVSLVENMLVVAAI). Over 64 to 72 (AKNRNLHSP) the chain is Cytoplasmic. The helical transmembrane segment at 73-93 (MYCFICCLALSDLLVSISNVL) threads the bilayer. Over 94–118 (ETAVMLLLEAGALAVGATVVQQLDN) the chain is Extracellular. The helical transmembrane segment at 119–140 (VIDVLICSSMVSSLCFLGAIAM) threads the bilayer. Topologically, residues 141 to 163 (DRYISIFYALRYHSIVTLSRAQW) are cytoplasmic. A helical transmembrane segment spans residues 164–183 (ATAAVWAASILSSTLFIAYY). Over 184–191 (DRTVVLLC) the chain is Extracellular. Residues 192 to 211 (LVVFFLAMLVLMAVLYAHML) traverse the membrane as a helical segment. Topologically, residues 212–240 (TQACQHVQGITRLHKRQHLVQQGFGLKGA) are cytoplasmic. A helical transmembrane segment spans residues 241–266 (ATLTILLGVFLLCWGPFFLHLTLIAV). The Extracellular segment spans residues 267–279 (CPQHPTCSCVFKN). The helical transmembrane segment at 280–300 (FKLFLALIICNAIVDPLIYAF) threads the bilayer. Topologically, residues 301-317 (RSQELRKTLKEVLLFSW) are cytoplasmic.

It belongs to the G-protein coupled receptor 1 family. Interacts with MGRN1, but does not undergo MGRN1-mediated ubiquitination; this interaction competes with GNAS-binding and thus inhibits agonist-induced cAMP production. Interacts with OPN3; the interaction results in a decrease in MC1R-mediated cAMP signaling and ultimately a decrease in melanin production in melanocytes.

It is found in the cell membrane. Its function is as follows. Receptor for MSH (alpha, beta and gamma) and ACTH. The activity of this receptor is mediated by G proteins which activate adenylate cyclase. Mediates melanogenesis, the production of eumelanin (black/brown) and phaeomelanin (red/yellow), via regulation of cAMP signaling in melanocytes. The sequence is that of Melanocyte-stimulating hormone receptor (MC1R) from Galago senegalensis (Northern lesser bushbaby).